Reading from the N-terminus, the 620-residue chain is Membrane protein insertase YidC (620 aa).

Residues 7–27 (NYLIAIALSVMVVLGWQFFYM) form a helical membrane-spanning segment. Residues 37 to 58 (AEQAQQAQQAKTPATQATPGAA) are compositionally biased toward low complexity. Positions 37–77 (AEQAQQAQQAKTPATQATPGAAVNGALPGQTQASATTSRED) are disordered. Helical transmembrane passes span 399–419 (FGVA…PLAS), 469–489 (WPLL…YITI), 514–534 (LFGL…WPII), and 560–580 (WMPL…VIYW).

The protein belongs to the OXA1/ALB3/YidC family. Type 1 subfamily. In terms of assembly, interacts with the Sec translocase complex via SecD. Specifically interacts with transmembrane segments of nascent integral membrane proteins during membrane integration.

It localises to the cell inner membrane. Its function is as follows. Required for the insertion and/or proper folding and/or complex formation of integral membrane proteins into the membrane. Involved in integration of membrane proteins that insert both dependently and independently of the Sec translocase complex, as well as at least some lipoproteins. Aids folding of multispanning membrane proteins. This chain is Membrane protein insertase YidC, found in Allorhizobium ampelinum (strain ATCC BAA-846 / DSM 112012 / S4) (Agrobacterium vitis (strain S4)).